The chain runs to 202 residues: MVARRAAGSCPAHIAAGRLGEEAACAYLAASGMRILARNWRAGHLELDIIAQDNGTIVFAEVKTRAARGLESPHEALTPAKRSRLVRAAGMWLSSNDMWDRPCRFDLVCVTTEARAPEPEQMSLQAARAAGTAQARRAAGSGLPGILGKAASRLFGAGSPQRSHRAGGAPDSPEQLLRVEHIPHAFDLSESLGGGDAAWQPW.

This sequence belongs to the UPF0102 family.

This Oleidesulfovibrio alaskensis (strain ATCC BAA-1058 / DSM 17464 / G20) (Desulfovibrio alaskensis) protein is UPF0102 protein Dde_1093.